Here is a 463-residue protein sequence, read N- to C-terminus: Na(+)/H(+) antiporter NhaA 3 (463 aa).

Helical transmembrane passes span 28 to 48 (FLATEAGGAVLLLLAAVAALL), 79 to 99 (LHHWVNDGAMAIFFAVVGLEI), 114 to 134 (IAVPALGAIGGLILPAAIYFV), 144 to 164 (GWGIPMSTDTAFVIGILALFG), 173 to 193 (LFLLTLAIVDDIGAITVVGIF), 196 to 216 (DHLNPVGLAVAGATVLAILGL), 232 to 252 (LVLWGAIHVSGVHATLAGVLV), 305 to 325 (VLHPISAFVVVPVFGLANAGV), 344 to 364 (VAAALIAGNACGISVAGVAAI), 377 to 397 (YGHLLGAATLAGIGFTISLFI), and 413 to 433 (IGILAGSLVAALAGTVILRVL). The interval 444-463 (TDEPVPRLPPRPWRAPVPAK) is disordered. The span at 449-463 (PRLPPRPWRAPVPAK) shows a compositional bias: pro residues.

This sequence belongs to the NhaA Na(+)/H(+) (TC 2.A.33) antiporter family.

It is found in the cell membrane. The enzyme catalyses Na(+)(in) + 2 H(+)(out) = Na(+)(out) + 2 H(+)(in). Functionally, na(+)/H(+) antiporter that extrudes sodium in exchange for external protons. The polypeptide is Na(+)/H(+) antiporter NhaA 3 (Frankia alni (strain DSM 45986 / CECT 9034 / ACN14a)).